Consider the following 560-residue polypeptide: MNIDVASLLHQNDILLLFVVLAVGLSFGKIRFAKMQVGNSIGVLLTAILFGNAGFTFNTEALNIGFMLFIFCVGIEAGPNFFGIFFRDGKHYLLLALVVLLSAIAITLAMTHYLGLDIGLATGLMAGSLTATPVLVGAKDALNSGLSGISDPDIIKQTIDSLSVGYAMSYLMGLISLIFLAKLMPKLQKQDLAESSQQIARERGIGEVGQRKVYLPIIRAYRVGPELINWIDSRNLRELGIYRQTGCYIERIRRNGILANPDGDAILQEGDEIALVGYPDSHARLDPSFRNGKEVFDRDLLDLRIVEEEIVVKNDNISGKRLSELNLSEYGCFLNRVVRAQIEMPMDHNILLNKGDILQVSGEKSRVLGLAERIGFISIHSQIADLLAFCCFFIIGLLIGSITLAFGHVAFGLGSAAGLLIAGITLGFLRANHPTFGYVPQGALNMAKDLGLMVFMVGIGLSAGSNLFDSFAHIGPMVLVTSLMVSVIPVVLAYLFGAYVLKMNRALLFGAIIGARTCAPAMDMINEHARSTIPALGYAGTYAIANVLLTIAGTLIIIMN.

5 helical membrane-spanning segments follow: residues 5–25, 37–57, 66–86, 91–111, and 161–181; these read VASL…AVGL, VGNS…GFTF, FMLF…GIFF, HYLL…LAMT, and SLSV…IFLA. RCK C-terminal domains lie at 203 to 292 and 293 to 377; these read RGIG…FRNG and KEVF…IGFI. 6 helical membrane-spanning segments follow: residues 386–406, 409–429, 452–472, 477–497, 506–526, and 539–559; these read LLAF…TLAF, VAFG…LGFL, LMVF…DSFA, MVLV…YLFG, ALLF…DMIN, and AGTY…IIIM.

The protein belongs to the AAE transporter (TC 2.A.81) family. YbjL subfamily.

It is found in the cell membrane. The polypeptide is Putative transport protein PBPRA2420 (Photobacterium profundum (strain SS9)).